Reading from the N-terminus, the 226-residue chain is Cobalt transport protein CbiM 1 (226 aa).

The next 6 membrane-spanning stretches (helical) occupy residues 6-26 (GFLP…VVAY), 43-63 (MLLG…MPSV), 75-95 (LGAI…VLLF), 107-127 (TLGA…AAVF), 135-155 (FPFG…TYVT), and 181-201 (VFAL…VVVM).

Belongs to the CbiM family. As to quaternary structure, forms an energy-coupling factor (ECF) transporter complex composed of an ATP-binding protein (A component, CbiO), a transmembrane protein (T component, CbiQ) and 2 possible substrate-capture proteins (S components, CbiM and CbiN) of unknown stoichimetry.

The protein localises to the cell inner membrane. It participates in cofactor biosynthesis; adenosylcobalamin biosynthesis. Functionally, part of the energy-coupling factor (ECF) transporter complex CbiMNOQ involved in cobalt import. This Pelobacter propionicus (strain DSM 2379 / NBRC 103807 / OttBd1) protein is Cobalt transport protein CbiM 1 (cbim1).